We begin with the raw amino-acid sequence, 178 residues long: Large ribosomal subunit protein uL10 (178 aa).

It belongs to the universal ribosomal protein uL10 family. In terms of assembly, part of the ribosomal stalk of the 50S ribosomal subunit. The N-terminus interacts with L11 and the large rRNA to form the base of the stalk. The C-terminus forms an elongated spine to which L12 dimers bind in a sequential fashion forming a multimeric L10(L12)X complex.

Its function is as follows. Forms part of the ribosomal stalk, playing a central role in the interaction of the ribosome with GTP-bound translation factors. The polypeptide is Large ribosomal subunit protein uL10 (Dictyoglomus thermophilum (strain ATCC 35947 / DSM 3960 / H-6-12)).